The following is an 835-amino-acid chain: U-box domain-containing protein 35 (835 aa).

Disordered regions lie at residues 1-22 (MSRS…SRTV), 177-303 (VRPS…SSNR), and 410-457 (EKEK…LEGT). Residues 10-19 (LPPPPPPPPS) are compositionally biased toward pro residues. The segment covering 195–218 (RTNSSSGSSGPTSDSSDVMSSAHD) has biased composition (low complexity). The span at 269-282 (SSINRSSTDTTSRW) shows a compositional bias: polar residues. Composition is skewed to basic and acidic residues over residues 285–295 (RRRDYEERKEA) and 410–455 (EKEK…EKLE). Residues 340-459 (QSYTDNQVNL…EKEKLEGTLG (120 aa)) adopt a coiled-coil conformation. The Protein kinase domain maps to 480 to 745 (FSEELKIGMG…DLKDQILPAL (266 aa)). ATP contacts are provided by residues 486–494 (IGMGAYGAV) and lysine 507. The active-site Proton acceptor is aspartate 602. In terms of domain architecture, U-box spans 765–835 (QPPTHFICPL…TAIMEWRSTR (71 aa)).

This sequence belongs to the protein kinase superfamily. Ser/Thr protein kinase family.

The catalysed reaction is L-seryl-[protein] + ATP = O-phospho-L-seryl-[protein] + ADP + H(+). It catalyses the reaction L-threonyl-[protein] + ATP = O-phospho-L-threonyl-[protein] + ADP + H(+). The enzyme catalyses S-ubiquitinyl-[E2 ubiquitin-conjugating enzyme]-L-cysteine + [acceptor protein]-L-lysine = [E2 ubiquitin-conjugating enzyme]-L-cysteine + N(6)-ubiquitinyl-[acceptor protein]-L-lysine.. The protein operates within protein modification; protein ubiquitination. Functions as an E3 ubiquitin ligase. The protein is U-box domain-containing protein 35 (PUB35) of Arabidopsis thaliana (Mouse-ear cress).